Consider the following 380-residue polypeptide: Protein trichome birefringence-like 38 (380 aa).

A helical; Signal-anchor for type II membrane protein transmembrane segment spans residues 7–29 (SLLLLFLPLLTVTILSGVEQAFA). Positions 134 to 136 (GDS) match the GDS motif motif. The short motif at 357–371 (DCSHWCLPGLPDTWN) is the DCXHWCLPGXXDXWN motif element.

This sequence belongs to the PC-esterase family. TBL subfamily.

Its subcellular location is the membrane. Functionally, may act as a bridging protein that binds pectin and other cell wall polysaccharides. Probably involved in maintaining esterification of pectins. May be involved in the specific O-acetylation of cell wall polymers. The sequence is that of Protein trichome birefringence-like 38 (TBL38) from Arabidopsis thaliana (Mouse-ear cress).